The sequence spans 276 residues: Bifunctional protein FolD (276 aa).

Residues 157–159 (NRS), Ser-182, and Ile-223 each bind NADP(+).

Belongs to the tetrahydrofolate dehydrogenase/cyclohydrolase family. In terms of assembly, homodimer.

It catalyses the reaction (6R)-5,10-methylene-5,6,7,8-tetrahydrofolate + NADP(+) = (6R)-5,10-methenyltetrahydrofolate + NADPH. The catalysed reaction is (6R)-5,10-methenyltetrahydrofolate + H2O = (6R)-10-formyltetrahydrofolate + H(+). It participates in one-carbon metabolism; tetrahydrofolate interconversion. Functionally, catalyzes the oxidation of 5,10-methylenetetrahydrofolate to 5,10-methenyltetrahydrofolate and then the hydrolysis of 5,10-methenyltetrahydrofolate to 10-formyltetrahydrofolate. This is Bifunctional protein FolD from Thermoplasma acidophilum (strain ATCC 25905 / DSM 1728 / JCM 9062 / NBRC 15155 / AMRC-C165).